We begin with the raw amino-acid sequence, 409 residues long: Sex-determination protein fem-3 (409 aa).

Component of a complex containing fem-1, fem-2 and fem-3. Interacts with fem-1 and fem-2 (via N-terminus). Part of a E3 ubiquitin-protein ligase complex, at least composed of cul-2, elc-1, tra-1, fem-1, fem-2 and fem-3; mediates the ubiquitination and subsequent proteasomal degradation of tra-1. Interacts with sel-10. Interacts with tra-2.

In terms of biological role, required for male development. In XO (male) animals, fem-3 directs male differentiation in all tissues. In XX (hermaphrodite animals), it specifies the first 80 or so germ cells to be sperm. Negatively regulates male development when bound to tra-2. This is Sex-determination protein fem-3 from Caenorhabditis briggsae.